The following is a 1766-amino-acid chain: DNA-directed RNA polymerase II subunit RPB1-B (1766 aa).

Positions 69, 72, 79, and 82 each coordinate Zn(2+). Mg(2+) is bound by residues Asp-487, Asp-489, and Asp-491. The tract at residues 813-825 (PHEFFFHTMAGRE) is bridging helix. The interval 1660-1766 (HAMSSAAPPS…EFGDEEEEEQ (107 aa)) is disordered. Residues 1706–1716 (RGDEPSTHRSD) are compositionally biased toward basic and acidic residues. The span at 1742–1756 (PTAKTPQQAAPPTAA) shows a compositional bias: low complexity.

Belongs to the RNA polymerase beta' chain family. In terms of assembly, component of the RNA polymerase II (Pol II) complex consisting of 12 subunits.

The protein resides in the nucleus. It carries out the reaction RNA(n) + a ribonucleoside 5'-triphosphate = RNA(n+1) + diphosphate. Functionally, DNA-dependent RNA polymerase catalyzes the transcription of DNA into RNA using the four ribonucleoside triphosphates as substrates. Largest and catalytic component of RNA polymerase II which synthesizes mRNA precursors and many functional non-coding RNAs. Forms the polymerase active center together with the second largest subunit. Pol II is the central component of the basal RNA polymerase II transcription machinery. It is composed of mobile elements that move relative to each other. RPB1 is part of the core element with the central large cleft, the clamp element that moves to open and close the cleft and the jaws that are thought to grab the incoming DNA template. At the start of transcription, a single-stranded DNA template strand of the promoter is positioned within the central active site cleft of Pol II. A bridging helix emanates from RPB1 and crosses the cleft near the catalytic site and is thought to promote translocation of Pol II by acting as a ratchet that moves the RNA-DNA hybrid through the active site by switching from straight to bent conformations at each step of nucleotide addition. During transcription elongation, Pol II moves on the template as the transcript elongates. In Trypanosoma brucei brucei, this protein is DNA-directed RNA polymerase II subunit RPB1-B (TRP5.9).